The primary structure comprises 131 residues: Ribosome-binding factor A (131 aa).

Belongs to the RbfA family. As to quaternary structure, monomer. Binds 30S ribosomal subunits, but not 50S ribosomal subunits or 70S ribosomes.

Its subcellular location is the cytoplasm. Its function is as follows. One of several proteins that assist in the late maturation steps of the functional core of the 30S ribosomal subunit. Associates with free 30S ribosomal subunits (but not with 30S subunits that are part of 70S ribosomes or polysomes). Required for efficient processing of 16S rRNA. May interact with the 5'-terminal helix region of 16S rRNA. This chain is Ribosome-binding factor A, found in Thermotoga sp. (strain RQ2).